We begin with the raw amino-acid sequence, 377 residues long: Protein FAM199X-B (377 aa).

The segment covering 240-254 (KEHSPRQRCTRESWK) has biased composition (basic and acidic residues). A disordered region spans residues 240–350 (KEHSPRQRCT…EQRQARKERI (111 aa)). The span at 256–301 (TSYSTASTSGVSGASVSSSSASMVSTASSTGSSGGNSASNSSANMS) shows a compositional bias: low complexity. Basic residues predominate over residues 319-338 (DSKKRSKQRKLQQKALRKRQ). The stretch at 321–349 (KKRSKQRKLQQKALRKRQLKEQRQARKER) forms a coiled coil. Over residues 339–350 (LKEQRQARKERI) the composition is skewed to basic and acidic residues.

This sequence belongs to the FAM199 family.

The polypeptide is Protein FAM199X-B (fam199x-b) (Xenopus laevis (African clawed frog)).